A 511-amino-acid chain; its full sequence is Apolipoprotein N-acyltransferase (511 aa).

Helical transmembrane passes span 24-44, 58-78, 90-110, 125-145, 163-183, and 192-212; these read LALA…LLYL, GWWY…VSIH, FLML…AWLW, LAFA…LTGF, VPVG…ALLV, and GASL…GLYL. One can recognise a CN hydrolase domain in the interval 230–470; the sequence is IQGNIAQELK…QGILRGEVIP (241 aa). The active-site Proton acceptor is the Glu-269. The active site involves Lys-330. The Nucleophile role is filled by Cys-382. A helical membrane pass occupies residues 482–502; sequence VWPLAGLAGVLLLWALLGRQL.

It belongs to the CN hydrolase family. Apolipoprotein N-acyltransferase subfamily.

It localises to the cell inner membrane. It carries out the reaction N-terminal S-1,2-diacyl-sn-glyceryl-L-cysteinyl-[lipoprotein] + a glycerophospholipid = N-acyl-S-1,2-diacyl-sn-glyceryl-L-cysteinyl-[lipoprotein] + a 2-acyl-sn-glycero-3-phospholipid + H(+). It participates in protein modification; lipoprotein biosynthesis (N-acyl transfer). In terms of biological role, catalyzes the phospholipid dependent N-acylation of the N-terminal cysteine of apolipoprotein, the last step in lipoprotein maturation. In Pseudomonas aeruginosa (strain UCBPP-PA14), this protein is Apolipoprotein N-acyltransferase.